A 433-amino-acid polypeptide reads, in one-letter code: Enolase (433 aa).

Glutamine 167 provides a ligand contact to (2R)-2-phosphoglycerate. Glutamate 209 serves as the catalytic Proton donor. Positions 246, 291, and 318 each coordinate Mg(2+). Residues lysine 343, arginine 372, serine 373, and lysine 394 each coordinate (2R)-2-phosphoglycerate. Lysine 343 serves as the catalytic Proton acceptor.

This sequence belongs to the enolase family. As to quaternary structure, component of the RNA degradosome, a multiprotein complex involved in RNA processing and mRNA degradation. It depends on Mg(2+) as a cofactor.

It localises to the cytoplasm. The protein resides in the secreted. The protein localises to the cell surface. The catalysed reaction is (2R)-2-phosphoglycerate = phosphoenolpyruvate + H2O. It participates in carbohydrate degradation; glycolysis; pyruvate from D-glyceraldehyde 3-phosphate: step 4/5. Its function is as follows. Catalyzes the reversible conversion of 2-phosphoglycerate (2-PG) into phosphoenolpyruvate (PEP). It is essential for the degradation of carbohydrates via glycolysis. The protein is Enolase of Histophilus somni (strain 129Pt) (Haemophilus somnus).